Reading from the N-terminus, the 102-residue chain is MRTFTDFVSGAPIVRSLQKSTIRKYGYNLAPHMFLLLHVDELSIFSAYQASLPGEKKVDTERLKRDLCPRKPIEIKYFSQICNDMMNKKDRLGDVLHVCCPS.

The protein belongs to the helicase family. Yeast subtelomeric Y' repeat subfamily.

This is an uncharacterized protein from Saccharomyces cerevisiae (strain ATCC 204508 / S288c) (Baker's yeast).